A 152-amino-acid polypeptide reads, in one-letter code: Transcriptional regulator MraZ (152 aa).

SpoVT-AbrB domains follow at residues 5-52 and 81-124; these read ATLV…TLPE and ASEC…DEQV.

It belongs to the MraZ family. As to quaternary structure, forms oligomers.

It localises to the cytoplasm. The protein resides in the nucleoid. Negatively regulates its own expression and that of the subsequent genes in the proximal part of the division and cell wall (dcw) gene cluster. Acts by binding directly to DNA. May also regulate the expression of genes outside the dcw cluster. This Proteus mirabilis (strain HI4320) protein is Transcriptional regulator MraZ.